The following is a 281-amino-acid chain: Ras-related protein Rab-40C (281 aa).

GTP contacts are provided by S23, G26, K27, and S46. A switch-I region spans residues 41 to 49 (SPYAYSNGI). The Mg(2+) site is built by S46 and D69. G72, N126, and R127 together coordinate GTP. The segment at 72 to 88 (GQGRFCTIFRSYSRGAQ) is switch-II. In terms of domain architecture, SOCS box spans 175–228 (LMRHGMEKIWRPNRVFSLQDLCCRAIVSCTPVHLIDKLPLPVTIKSHLKSFSMA). The tract at residues 245-281 (SGAGGGGSKGNSLKRSKSIRPPQSPPQNCSRSNCKIS) is disordered. Residues 270 to 281 (PQNCSRSNCKIS) show a composition bias toward polar residues. C273 is lipidated: S-palmitoyl cysteine. The S-geranylgeranyl cysteine moiety is linked to residue C278.

Belongs to the small GTPase superfamily. Rab family. In terms of assembly, component of the cullin-5-RING E3 ubiquitin-protein ligase complex (ECS(RAB40C) complex) composed of CUL5, Elongin BC (ELOB and ELOC), RNF7/RBX2 and RAB40C. Interacts with protein phosphatase 6 (PP6) complex components ANKRD28, ANKRD52, PPP6C, PP6R1 and PP6R2; the interaction leads to ANKRD28 ubiquitination and decreased PP6 activity. Interacts with DAB2IP; DAB2IP acts as a GAP for RAB40C. Mg(2+) is required as a cofactor.

The protein resides in the cell membrane. It localises to the cytoplasm. The protein localises to the cytosol. Its subcellular location is the golgi apparatus membrane. It carries out the reaction GTP + H2O = GDP + phosphate + H(+). The protein operates within protein modification; protein ubiquitination. Its activity is regulated as follows. Regulated by guanine nucleotide exchange factors (GEFs) which promote the exchange of bound GDP for free GTP. Regulated by GTPase activating proteins (GAPs) including DAB2IP, which increase the GTP hydrolysis activity. Inhibited by GDP dissociation inhibitors (GDIs). Functionally, RAB40C small GTPase acts as substrate-recognition component of the ECS(RAB40C) E3 ubiquitin ligase complex which mediates the ubiquitination and subsequent proteasomal degradation of target proteins. The Rab40 subfamily belongs to the Rab family that are key regulators of intracellular membrane trafficking, from the formation of transport vesicles to their fusion with membranes. Rabs cycle between an inactive GDP-bound form and an active GTP-bound form that is able to recruit to membranes different sets of downstream effectors directly responsible for vesicle formation, movement, tethering and fusion. As part of the ECS(RAB40C) complex, mediates ANKRD28 ubiquitination and degradation, thereby inhibiting protein phosphatase 6 (PP6) complex activity and focal adhesion assembly during cell migration. Also negatively regulate lipid droplets accumulation in a GTP-dependent manner. In Homo sapiens (Human), this protein is Ras-related protein Rab-40C.